Here is a 733-residue protein sequence, read N- to C-terminus: Photosystem I P700 chlorophyll a apoprotein A2 (733 aa).

Transmembrane regions (helical) follow at residues 46-69, 135-158, 175-199, 273-291, 330-353, 369-395, 417-439, and 516-534; these read IFASHFGHLAIIFLWTSGTLFHVA, LYQGAVFLLILSSLFLFAGWLHLQ, LNHHLAGLFGVSSLAWTGHLVHVAI, IAHHHLAIAVLFIIAGHMY, LHFQLGLALASLGVITSLVAQHMY, AALYTHHQYIAGFLMVGAFAHGAIFFV, ALISHLSWVSLFLGFHTLGLYVH, and FLVHHAIALGLHTTTLILV. 2 residues coordinate [4Fe-4S] cluster: C558 and C567. A run of 2 helical transmembrane segments spans residues 574 to 595 and 642 to 664; these read AFYLAMFWMLNTLGWLTFYWHW and LSVWAWMFLFGHLVWATGFMFLI. Chlorophyll a-binding residues include H653, M661, and Y669. W670 contacts phylloquinone. A helical membrane pass occupies residues 706–726; that stretch reads LVGLAHFTVGYVLTYAAFLIA.

It belongs to the PsaA/PsaB family. The PsaA/B heterodimer binds the P700 chlorophyll special pair and subsequent electron acceptors. PSI consists of a core antenna complex that captures photons, and an electron transfer chain that converts photonic excitation into a charge separation. The cyanobacterial PSI reaction center is composed of one copy each of PsaA,B,C,D,E,F,I,J,K,L,M and X, and forms trimeric complexes. It depends on PSI electron transfer chain: 5 chlorophyll a, 1 chlorophyll a', 2 phylloquinones and 3 4Fe-4S clusters. PSI core antenna: 90 chlorophyll a, 22 carotenoids, 3 phospholipids and 1 galactolipid. P700 is a chlorophyll a/chlorophyll a' dimer, A0 is one or more chlorophyll a, A1 is one or both phylloquinones and FX is a shared 4Fe-4S iron-sulfur center. as a cofactor.

Its subcellular location is the cellular thylakoid membrane. The enzyme catalyses reduced [plastocyanin] + hnu + oxidized [2Fe-2S]-[ferredoxin] = oxidized [plastocyanin] + reduced [2Fe-2S]-[ferredoxin]. Its function is as follows. PsaA and PsaB bind P700, the primary electron donor of photosystem I (PSI), as well as the electron acceptors A0, A1 and FX. PSI is a plastocyanin/cytochrome c6-ferredoxin oxidoreductase, converting photonic excitation into a charge separation, which transfers an electron from the donor P700 chlorophyll pair to the spectroscopically characterized acceptors A0, A1, FX, FA and FB in turn. Oxidized P700 is reduced on the lumenal side of the thylakoid membrane by plastocyanin or cytochrome c6. This is Photosystem I P700 chlorophyll a apoprotein A2 from Picosynechococcus sp. (strain ATCC 27264 / PCC 7002 / PR-6) (Agmenellum quadruplicatum).